A 318-amino-acid polypeptide reads, in one-letter code: L-malyl-CoA/beta-methylmalyl-CoA lyase (318 aa).

The substrate site is built by Phe19, Arg24, Lys30, and Arg76. Mg(2+) contacts are provided by Glu141 and Asp168. Residues 167–168 and 251–252 each bind substrate; these read AD and IH.

Belongs to the HpcH/HpaI aldolase family. Homohexamer. Dimer of trimers. Requires Mg(2+) as cofactor. The cofactor is Mn(2+).

It carries out the reaction (S)-malyl-CoA = glyoxylate + acetyl-CoA. The enzyme catalyses (2R,3S)-beta-methylmalyl-CoA = propanoyl-CoA + glyoxylate. Its activity is regulated as follows. In vitro inhibited by EDTA. Its function is as follows. Involved in the ethylmalonyl-CoA pathway for acetate assimilation. Catalyzes the reversible condensation of glyoxylate and acetyl-CoA to L-malyl-CoA and the reversible condensation of glyoxylate and propionyl-CoA to beta-methylmalyl-CoA. The sequence is that of L-malyl-CoA/beta-methylmalyl-CoA lyase from Rhodobacter capsulatus (Rhodopseudomonas capsulata).